Consider the following 248-residue polypeptide: Triosephosphate isomerase (248 aa).

9 to 11 (NWK) is a binding site for substrate. The Electrophile role is filled by His92. Glu164 functions as the Proton acceptor in the catalytic mechanism. Residues Gly170, Ser210, and 231 to 232 (GG) contribute to the substrate site.

This sequence belongs to the triosephosphate isomerase family. Homodimer.

The protein resides in the cytoplasm. The catalysed reaction is D-glyceraldehyde 3-phosphate = dihydroxyacetone phosphate. It functions in the pathway carbohydrate biosynthesis; gluconeogenesis. It participates in carbohydrate degradation; glycolysis; D-glyceraldehyde 3-phosphate from glycerone phosphate: step 1/1. Functionally, involved in the gluconeogenesis. Catalyzes stereospecifically the conversion of dihydroxyacetone phosphate (DHAP) to D-glyceraldehyde-3-phosphate (G3P). The sequence is that of Triosephosphate isomerase from Mycoplasma capricolum subsp. capricolum (strain California kid / ATCC 27343 / NCTC 10154).